A 433-amino-acid chain; its full sequence is sn-glycerol-3-phosphate-binding periplasmic protein UgpB (433 aa).

Positions 1–25 (MFTRLITTSVLTGAIALTIGSQAFA) are cleaved as a signal peptide. Sn-glycerol 3-phosphate is bound by residues tyrosine 67, aspartate 91, serine 146, serine 273, glycine 307, tyrosine 346, and arginine 397.

The protein belongs to the bacterial solute-binding protein 1 family. The complex is composed of two ATP-binding proteins (UgpC), two transmembrane proteins (UgpA and UgpE) and a solute-binding protein (UgpB).

Its subcellular location is the periplasm. Functionally, part of the ABC transporter complex UgpBAEC involved in sn-glycerol-3-phosphate (G3P) import. Binds G3P. The sequence is that of sn-glycerol-3-phosphate-binding periplasmic protein UgpB (ugpB) from Brucella abortus (strain 2308).